A 1127-amino-acid polypeptide reads, in one-letter code: MAENKGGGEAESGGGGSGSAPVTAGAAGPAAQEAEPPLTAVLVEEEEEEGGRAGAEGGAAGPDDGGVAAASSGSAQAASSPAASVGTGVAGGAVSTPAPAPASAPAPGPSAGPPPGPPASLLDTCAVCQQSLQSRREAEPKLLPCLHSFCLRCLPEPERQLSVPIPGGSNGDIQQVGVIRCPVCRQECRQIDLVDNYFVKDTSEAPSSSDEKSEQVCTSCEDNASAVGFCVECGEWLCKTCIEAHQRVKFTKDHLIRKKEDVSESVGASGQRPVFCPVHKQEQLKLFCETCDRLTCRDCQLLEHKEHRYQFLEEAFQNQKGAIENLLAKLLEKKNYVHFAATQVQNRIKEVNETNKRVEQEIKVAIFTLINEINKKGKSLLQQLENVTKERQMKLLQQQNDITGLSRQVKHVMNFTNWAIASGSSTALLYSKRLITFQLRHILKARCDPVPAANGAIRFHCDPTFWAKNVVNLGNLVIESKPAPGYTPNVVVGQVPPGTNHISKTPGQINLAQLRLQHMQQQVYAQKHQQLQQMRMQQPPAPVPTTTTTTQQHPRQAAPQMLQQQPPRLISVQTMQRGNMNCGAFQAHQMRLAQNAARIPGIPRHSGPQYSMMQPHLQRQHSNPGHAGPFPVVSVHNTTINPTSPTTATMANANRGPTSPSVTAIELIPSVTNPENLPSLPDIPPIQLEDAGSSSLDNLLSRYISGSHLPPQPTSTMNPSPGPSALSPGSSGLSNSHTPVRPPSTSSTGSRGSCGSSGRTAEKTSLSFKSDQVKVKQEPGTEDEICSFSGGVKQEKTEDGRRSACMLSSPESSLTPPLSTNLHLESELDALASLENHVKIEPADMNESCKQSGLSSLVNGKSPIRSLMHRSARIGGDGNNKDDDPNEDWCAVCQNGGDLLCCEKCPKVFHLTCHVPTLLSFPSGDWICTFCRDIGKPEVEYDCDNLQHSKKGKTAQGLSPVDQRKCERLLLYLYCHELSIEFQEPVPASIPNYYKIIKKPMDLSTVKKKLQKKHSQHYQIPDDFVADVRLIFKNCERFNEMMKVVQVYADTQEINLKADSEVAQAGKAVALYFEDKLTEIYSDRTFAPLPEFEQEEDDGEVTEDSDEDFIQPRRKRLKSDERPVHIK.

Over residues 1–18 (MAENKGGGEAESGGGGSG) the composition is skewed to gly residues. Residues 1-118 (MAENKGGGEA…PSAGPPPGPP (118 aa)) are disordered. The necessary for E3 ubiquitin-protein ligase activity and repression of SMAD4 signaling and transcriptional repression stretch occupies residues 1-147 (MAENKGGGEA…AEPKLLPCLH (147 aa)). Residues 19–37 (SAPVTAGAAGPAAQEAEPP) are compositionally biased toward low complexity. Gly residues predominate over residues 52–64 (RAGAEGGAAGPDD). Low complexity predominate over residues 65–97 (GGVAAASSGSAQAASSPAASVGTGVAGGAVSTP). The span at 98 to 118 (APAPASAPAPGPSAGPPPGPP) shows a compositional bias: pro residues. The RING-type zinc finger occupies 125-154 (CAVCQQSLQSRREAEPKLLPCLHSFCLRCL). 2 consecutive B box-type zinc fingers follow at residues 212–259 (KSEQ…IRKK) and 271–312 (QRPV…YQFL). Positions 217, 220, 241, 245, 276, 279, 299, and 304 each coordinate Zn(2+). Residues 299–401 (CQLLEHKEHR…QMKLLQQQND (103 aa)) form a necessary for oligomerization region. A coiled-coil region spans residues 299–401 (CQLLEHKEHR…QMKLLQQQND (103 aa)). Residues lysine 329, lysine 334, lysine 481, and lysine 504 each participate in a glycyl lysine isopeptide (Lys-Gly) (interchain with G-Cter in SUMO2) cross-link. Arginine 515 carries the post-translational modification Asymmetric dimethylarginine; alternate. Arginine 515 carries the omega-N-methylarginine; alternate modification. Lysine 527 is covalently cross-linked (Glycyl lysine isopeptide (Lys-Gly) (interchain with G-Cter in SUMO2)). Residue arginine 535 is modified to Omega-N-methylarginine. Residues 536-563 (MQQPPAPVPTTTTTTQQHPRQAAPQMLQ) are disordered. Asymmetric dimethylarginine is present on arginine 577. The residue at position 591 (arginine 591) is an Asymmetric dimethylarginine; alternate. Residue arginine 591 is modified to Omega-N-methylarginine; alternate. Residues arginine 598 and arginine 604 each carry the asymmetric dimethylarginine modification. Disordered regions lie at residues 608–629 (PQYS…HAGP), 673–692 (NPEN…EDAG), and 703–818 (YISG…TPPL). The span at 723 to 759 (PSALSPGSSGLSNSHTPVRPPSTSSTGSRGSCGSSGR) shows a compositional bias: low complexity. An N6-acetyllysine; alternate mark is found at lysine 763 and lysine 769. Glycyl lysine isopeptide (Lys-Gly) (interchain with G-Cter in SUMO2); alternate cross-links involve residues lysine 763 and lysine 769. Lysine 774 is covalently cross-linked (Glycyl lysine isopeptide (Lys-Gly) (interchain with G-Cter in SUMO2)). Glycyl lysine isopeptide (Lys-Gly) (interchain with G-Cter in SUMO2); alternate cross-links involve residues lysine 776 and lysine 793. Residues lysine 776 and lysine 793 each participate in a glycyl lysine isopeptide (Lys-Gly) (interchain with G-Cter in SUMO1); alternate cross-link. Lysine 793 is subject to N6-acetyllysine; alternate. The span at 793–802 (KQEKTEDGRR) shows a compositional bias: basic and acidic residues. A Glycyl lysine isopeptide (Lys-Gly) (interchain with G-Cter in SUMO2) cross-link involves residue lysine 796. Phosphoserine is present on serine 803. A compositionally biased stretch (low complexity) spans 807–818 (LSSPESSLTPPL). Phosphothreonine is present on threonine 815. Lysine 861 is covalently cross-linked (Glycyl lysine isopeptide (Lys-Gly) (interchain with G-Cter in SUMO2)). Serine 862 bears the Phosphoserine mark. The segment at 887-934 (EDWCAVCQNGGDLLCCEKCPKVFHLTCHVPTLLSFPSGDWICTFCRDI) adopts a PHD-type zinc-finger fold. At lysine 951 the chain carries N6-acetyllysine. Lysine 953 is subject to N6-acetyllysine; alternate. Residue lysine 953 forms a Glycyl lysine isopeptide (Lys-Gly) (interchain with G-Cter in SUMO2); alternate linkage. The region spanning 957 to 1080 (GLSPVDQRKC…LYFEDKLTEI (124 aa)) is the Bromo domain. Residues lysine 1007 and lysine 1043 each participate in a glycyl lysine isopeptide (Lys-Gly) (interchain with G-Cter in SUMO2) cross-link. Threonine 1051 is modified (phosphothreonine). A Glycyl lysine isopeptide (Lys-Gly) (interchain with G-Cter in SUMO2) cross-link involves residue lysine 1057. The interval 1088–1127 (PLPEFEQEEDDGEVTEDSDEDFIQPRRKRLKSDERPVHIK) is disordered. Acidic residues predominate over residues 1092-1109 (FEQEEDDGEVTEDSDEDF). Phosphothreonine is present on threonine 1102. Residue serine 1105 is modified to Phosphoserine. A Glycyl lysine isopeptide (Lys-Gly) (interchain with G-Cter in SUMO2) cross-link involves residue lysine 1118. Residues 1118-1127 (KSDERPVHIK) are compositionally biased toward basic and acidic residues. The residue at position 1119 (serine 1119) is a Phosphoserine.

Belongs to the TRIM/RBCC family. Homooligomer and heterooligomer with TRIM24 and TRIM28 family members. Interacts with SMAD4 in unstimulated cells. Found in a complex with SMAD2 and SMAD3 upon addition of TGF-beta. Interacts with SMAD2 and SMAD3. Interacts with SMAD4 under basal and induced conditions and, upon TGF-beta signaling, with activated SMAD2. Forms a ternary complex with SMAD4 and SMAD2 upon TGF-beta signaling. Post-translationally, sumoylated with SUMO1. Expressed in stem cells at the bottom of the crypts of the colon (at protein level). Expressed in colon adenomas and adenocarcinomas (at protein level). Expressed in brain, lung, liver, spleen, thymus, prostate, kidney, testis, heart, placenta, pancreas, small intestine, ovary, colon, skeletal muscle and hematopoietic progenitors.

The protein resides in the nucleus. The catalysed reaction is S-ubiquitinyl-[E2 ubiquitin-conjugating enzyme]-L-cysteine + [acceptor protein]-L-lysine = [E2 ubiquitin-conjugating enzyme]-L-cysteine + N(6)-ubiquitinyl-[acceptor protein]-L-lysine.. Its pathway is protein modification; protein ubiquitination. Its function is as follows. Acts as an E3 ubiquitin-protein ligase. Promotes SMAD4 ubiquitination, nuclear exclusion and degradation via the ubiquitin proteasome pathway. According to PubMed:16751102, does not promote a decrease in the level of endogenous SMAD4. May act as a transcriptional repressor. Inhibits the transcriptional response to TGF-beta/BMP signaling cascade. Plays a role in the control of cell proliferation. Its association with SMAD2 and SMAD3 stimulates erythroid differentiation of hematopoietic stem/progenitor. Monoubiquitinates SMAD4 and acts as an inhibitor of SMAD4-dependent TGF-beta/BMP signaling cascade (Monoubiquitination of SMAD4 hampers its ability to form a stable complex with activated SMAD2/3 resulting in inhibition of TGF-beta/BMP signaling cascade). This Homo sapiens (Human) protein is E3 ubiquitin-protein ligase TRIM33 (TRIM33).